Consider the following 703-residue polypeptide: Elongation factor G 1 (703 aa).

One can recognise a tr-type G domain in the interval 8-290; that stretch reads ERYRNIGISA…AVIDFLPSPV (283 aa). Residues 17 to 24, 88 to 92, and 142 to 145 contribute to the GTP site; these read AHIDAGKT, DTPGH, and NKMD.

The protein belongs to the TRAFAC class translation factor GTPase superfamily. Classic translation factor GTPase family. EF-G/EF-2 subfamily.

Its subcellular location is the cytoplasm. Catalyzes the GTP-dependent ribosomal translocation step during translation elongation. During this step, the ribosome changes from the pre-translocational (PRE) to the post-translocational (POST) state as the newly formed A-site-bound peptidyl-tRNA and P-site-bound deacylated tRNA move to the P and E sites, respectively. Catalyzes the coordinated movement of the two tRNA molecules, the mRNA and conformational changes in the ribosome. The sequence is that of Elongation factor G 1 from Cupriavidus metallidurans (strain ATCC 43123 / DSM 2839 / NBRC 102507 / CH34) (Ralstonia metallidurans).